A 527-amino-acid polypeptide reads, in one-letter code: Splicing factor MUD2 (527 aa).

The interval 36-169 (DNAVIDTHFK…SKFNGDRDKR (134 aa)) is disordered. Over residues 42–55 (THFKRQKSDGELPK) the composition is skewed to basic and acidic residues. A Phosphoserine modification is found at S49. The span at 60–85 (RNVSHSNNRGPSSIITMSTNRTTYEQ) shows a compositional bias: polar residues. Over residues 94-109 (SYRDASGRSYNRENRY) the composition is skewed to basic and acidic residues. Residues 110–122 (SSHNTGPQWNNNP) are compositionally biased toward polar residues. Basic and acidic residues-rich tracts occupy residues 125–141 (RQRD…DRRG) and 155–169 (RKNE…RDKR). Residues 424–511 (LLLLNCLDPL…QFNDRTVLCT (88 aa)) form the RRM domain.

MSL5, MUD2 and PRP40 interact to form the commitment complex 2 (CC2), a precursor of mature spliceosomes.

Its function is as follows. Splicing factor that contacts pre-mRNA directly and is a component of the pre-mRNA-U1 snRNP complex (commitment complex 2) that forms during early spliceosome assembly in yeast extracts. The polypeptide is Splicing factor MUD2 (MUD2) (Saccharomyces cerevisiae (strain ATCC 204508 / S288c) (Baker's yeast)).